We begin with the raw amino-acid sequence, 245 residues long: Ribonuclease 3 (245 aa).

One can recognise an RNase III domain in the interval 18-146 (LSEFLENLSI…FVGAIYLDSG (129 aa)). Glutamate 59 is a binding site for Mg(2+). Residue aspartate 63 is part of the active site. The Mg(2+) site is built by aspartate 132 and glutamate 135. Glutamate 135 is a catalytic residue. A DRBM domain is found at 173 to 242 (DYKSLLQEYV…AEVALKAMED (70 aa)).

Belongs to the ribonuclease III family. As to quaternary structure, homodimer. The cofactor is Mg(2+).

It localises to the cytoplasm. It catalyses the reaction Endonucleolytic cleavage to 5'-phosphomonoester.. Functionally, digests double-stranded RNA. Involved in the processing of primary rRNA transcript to yield the immediate precursors to the large and small rRNAs (23S and 16S). Processes some mRNAs, and tRNAs when they are encoded in the rRNA operon. Processes pre-crRNA and tracrRNA of type II CRISPR loci if present in the organism. This chain is Ribonuclease 3, found in Borreliella afzelii (strain PKo) (Borrelia afzelii).